Here is a 157-residue protein sequence, read N- to C-terminus: ATP synthase subunit b (157 aa).

A helical membrane pass occupies residues leucine 11–methionine 31.

This sequence belongs to the ATPase B chain family. In terms of assembly, F-type ATPases have 2 components, F(1) - the catalytic core - and F(0) - the membrane proton channel. F(1) has five subunits: alpha(3), beta(3), gamma(1), delta(1), epsilon(1). F(0) has three main subunits: a(1), b(2) and c(10-14). The alpha and beta chains form an alternating ring which encloses part of the gamma chain. F(1) is attached to F(0) by a central stalk formed by the gamma and epsilon chains, while a peripheral stalk is formed by the delta and b chains.

The protein localises to the cell inner membrane. Functionally, f(1)F(0) ATP synthase produces ATP from ADP in the presence of a proton or sodium gradient. F-type ATPases consist of two structural domains, F(1) containing the extramembraneous catalytic core and F(0) containing the membrane proton channel, linked together by a central stalk and a peripheral stalk. During catalysis, ATP synthesis in the catalytic domain of F(1) is coupled via a rotary mechanism of the central stalk subunits to proton translocation. In terms of biological role, component of the F(0) channel, it forms part of the peripheral stalk, linking F(1) to F(0). This Vesicomyosocius okutanii subsp. Calyptogena okutanii (strain HA) protein is ATP synthase subunit b.